We begin with the raw amino-acid sequence, 89 residues long: Phasin PhaP (89 aa).

Helix regions lie at residues threonine 3–glutamate 26 and aspartate 39–glutamine 83.

Homotetramer.

The protein resides in the cellular thylakoid membrane. Its subcellular location is the cytoplasm. Its pathway is biopolymer metabolism; poly-(R)-3-hydroxybutanoate biosynthesis. Functionally, a phasin, it attaches to the polyhydroxybutyrate (PHB) granule surface regulating the number and size of PHB granules within a cell. It probably also acts as a regulator affecting the biosynthetic activity of PHB synthase in vivo. The chain is Phasin PhaP from Synechocystis sp. (strain ATCC 27184 / PCC 6803 / Kazusa).